Here is a 458-residue protein sequence, read N- to C-terminus: Glutamate--tRNA ligase 2 (458 aa).

The 'HIGH' region signature appears at 20–30 (PSPTGLIHVGN). The 'KMSKS' region signature appears at 251–255 (GLSKR). An ATP-binding site is contributed by lysine 254.

This sequence belongs to the class-I aminoacyl-tRNA synthetase family. Glutamate--tRNA ligase type 1 subfamily. Monomer.

Its subcellular location is the cytoplasm. It catalyses the reaction tRNA(Glu) + L-glutamate + ATP = L-glutamyl-tRNA(Glu) + AMP + diphosphate. Catalyzes the attachment of glutamate to tRNA(Glu) in a two-step reaction: glutamate is first activated by ATP to form Glu-AMP and then transferred to the acceptor end of tRNA(Glu). The protein is Glutamate--tRNA ligase 2 of Xanthobacter autotrophicus (strain ATCC BAA-1158 / Py2).